The chain runs to 426 residues: Protein sum2 (426 aa).

The region spanning 1 to 80 (MTEFIGSRIS…VKDLRIEEPA (80 aa)) is the Sm domain. Disordered regions lie at residues 79 to 100 (PATT…IGSN), 204 to 305 (GMPS…AKPR), and 348 to 426 (SCES…ANDQ). The segment covering 84-93 (SAPPVQPPND) has biased composition (pro residues). The span at 226 to 237 (VSASPSLQSMPP) shows a compositional bias: polar residues. Over residues 261–278 (RNSTVTNDRVVNTTVDVS) the composition is skewed to low complexity. Over residues 279–298 (QSQTVETSGPSKEVPTTQPD) the composition is skewed to polar residues. The region spanning 296–332 (QPDASAAKPRTEFDFQTANQKFQSMKDDLLKGKNDEE) is the DFDF domain. The FFD box signature appears at 335–351 (EFYKPKQSFFDNISCES). Residues 350–371 (ESKEKGMEAADRRALRDRERSL) are compositionally biased toward basic and acidic residues. Positions 360–380 (DRRALRDRERSLNMETFGVAG) match the TFG box motif. The span at 384 to 401 (RGRRGRGRGRGGRGRGRG) shows a compositional bias: basic residues. Polar residues predominate over residues 405–426 (NQYNQYRNSNGSQPRAQPANDQ).

Required for G2/M phase checkpoint control. The sequence is that of Protein sum2 (sum2) from Schizosaccharomyces pombe (strain 972 / ATCC 24843) (Fission yeast).